The following is a 354-amino-acid chain: UPF0425 pyridoxal phosphate-dependent protein MMP0002 (354 aa).

Lysine 210 carries the post-translational modification N6-(pyridoxal phosphate)lysine.

The protein belongs to the UPF0425 family. Pyridoxal 5'-phosphate serves as cofactor.

The polypeptide is UPF0425 pyridoxal phosphate-dependent protein MMP0002 (Methanococcus maripaludis (strain DSM 14266 / JCM 13030 / NBRC 101832 / S2 / LL)).